The chain runs to 600 residues: Baculoviral IAP repeat-containing protein 3 (600 aa).

One copy of the BIR 1 repeat lies at 27-94 (ELYRLSTYSA…RKLYPSCNFV (68 aa)). Ser138 is subject to Phosphoserine. BIR repeat units follow at residues 167–233 (EKAR…CPFL) and 253–320 (HAAR…CEYL). Positions 290, 293, 310, and 317 each coordinate Zn(2+). The 90-residue stretch at 436–525 (EESDDLALIR…ALYRDIFVQQ (90 aa)) folds into the CARD domain. Residues 553–588 (CKVCMDREVSIVFIPCGHLVVCKDCAPSLRKCPICR) form an RING-type zinc finger.

It belongs to the IAP family. As to quaternary structure, interacts with PRSS25; the interaction inhibits apoptotic suppressor activity. The BIR motifs region interacts with TNF receptor associated factors 1 and 2 (TRAF1 and TRAF2) to form a heteromeric complex, which is then recruited to the tumor necrosis factor receptor 2 (TNFR2). Interaction with TRAF2 is required for ubiquitination of IKBKE, degradation of NFKBIA and activation of NF-kappa-B. Interacts with RIP1, RIP2, RIP3, RIP4 and USP19. Post-translationally, auto-ubiquitinated and degraded by the proteasome in apoptotic cells.

It is found in the cytoplasm. The protein localises to the nucleus. It catalyses the reaction S-ubiquitinyl-[E2 ubiquitin-conjugating enzyme]-L-cysteine + [acceptor protein]-L-lysine = [E2 ubiquitin-conjugating enzyme]-L-cysteine + N(6)-ubiquitinyl-[acceptor protein]-L-lysine.. Its activity is regulated as follows. USP19 regulates the stability of BIRC3/c-IAP2 by preventing its ubiquitination. Functionally, multi-functional protein which regulates not only caspases and apoptosis, but also modulates inflammatory signaling and immunity, mitogenic kinase signaling and cell proliferation, as well as cell invasion and metastasis. Acts as an E3 ubiquitin-protein ligase regulating NF-kappa-B signaling and regulates both canonical and non-canonical NF-kappa-B signaling by acting in opposite directions: acts as a positive regulator of the canonical pathway and suppresses constitutive activation of non-canonical NF-kappa-B signaling. The target proteins for its E3 ubiquitin-protein ligase activity include: RIPK1, RIPK2, RIPK3, RIPK4, CASP3, CASP7, CASP8, IKBKE, TRAF1, and BCL10. Acts as an important regulator of innate immune signaling via regulation of Toll-like receptors (TLRs), Nodlike receptors (NLRs) and RIG-I like receptors (RLRs), collectively referred to as pattern recognition receptors (PRRs). Protects cells from spontaneous formation of the ripoptosome, a large multi-protein complex that has the capability to kill cancer cells in a caspase-dependent and caspase-independent manner. Suppresses ripoptosome formation by ubiquitinating RIPK1 and CASP8. In Mus musculus (Mouse), this protein is Baculoviral IAP repeat-containing protein 3 (Birc3).